The sequence spans 212 residues: MAIQLVGRKAGMTRIFTEDGVSVPVTVIEVEPNRVTQVKTAETDGYQAVQVTVGSRRSSRVNKAAAGHYAKANVEAGRGLWEFRLAGDEKEINVGDELTVADFESIQMVDVTGQSKGKGFQGAIKRHNFSMQDATHGNSLSHRAPGSIGQCQTPGRVWKGKKMAGHMGAAQVTTQSLEVVRVDTERNLILVKGAVPGAVNGDVILQSAVKAR.

At glutamine 152 the chain carries N5-methylglutamine.

Belongs to the universal ribosomal protein uL3 family. Part of the 50S ribosomal subunit. Forms a cluster with proteins L14 and L19. Methylated by PrmB.

One of the primary rRNA binding proteins, it binds directly near the 3'-end of the 23S rRNA, where it nucleates assembly of the 50S subunit. This chain is Large ribosomal subunit protein uL3, found in Marinomonas sp. (strain MWYL1).